We begin with the raw amino-acid sequence, 177 residues long: Large ribosomal subunit protein uL6 (177 aa).

It belongs to the universal ribosomal protein uL6 family. As to quaternary structure, part of the 50S ribosomal subunit.

Functionally, this protein binds to the 23S rRNA, and is important in its secondary structure. It is located near the subunit interface in the base of the L7/L12 stalk, and near the tRNA binding site of the peptidyltransferase center. This chain is Large ribosomal subunit protein uL6, found in Psychrobacter arcticus (strain DSM 17307 / VKM B-2377 / 273-4).